The chain runs to 405 residues: Patatin-like protein 2 (405 aa).

The 207-residue stretch at 24-230 (LSIDGGGVRG…AANNPTLCAM (207 aa)) folds into the PNPLA domain. A GXGXXG motif is present at residues 28–33 (GGGVRG). The GXSXG signature appears at 66–70 (GTSTG). The active-site Nucleophile is the S68. The active-site Proton acceptor is the D217. A DGA/G motif is present at residues 217–219 (DGG).

It belongs to the patatin family.

Possesses non-specific lipolytic acyl hydrolase (LAH) activity. Hydrolyzes phospholipids as well as galactolipids. May play a role in disease resistance. The protein is Patatin-like protein 2 (PLP2) of Oryza sativa subsp. indica (Rice).